The primary structure comprises 131 residues: Histone H2A-beta (131 aa).

The residue at position 2 (Ser2) is an N-acetylserine. Residues Lys5 and Lys9 each carry the N6-acetyllysine modification. N5-methylglutamine is present on Gln106. At Ser128 the chain carries Phosphoserine. The short motif at 128 to 129 (SQ) is the [ST]-Q motif element.

Belongs to the histone H2A family. The nucleosome is a histone octamer containing two molecules each of H2A, H2B, H3 and H4 assembled in one H3-H4 heterotetramer and two H2A-H2B heterodimers. The octamer wraps approximately 147 bp of DNA. Post-translationally, phosphorylated to form H2AS128ph (gamma-H2A) in response to DNA double-strand breaks (DSBs) generated by exogenous genotoxic agents and by stalled replication forks. Phosphorylation is dependent on the DNA damage checkpoint kinases rad3/ATR and tel1/ATM, spreads on either side of a detected DSB site and may mark the surrounding chromatin for recruitment of proteins required for DNA damage signaling and repair. Gamma-H2A is required for recruiting crb2, a modulator of DNA damage checkpoint signaling, to DSB sites. Gamma-H2A is removed from the DNA prior to the strand invasion-primer extension step of the repair process and subsequently dephosphorylated. Dephosphorylation is necessary for efficient recovery from the DNA damage checkpoint. Acetylated by esa1 to form H2AK4ac and H2AK7ac.

It is found in the nucleus. Its subcellular location is the chromosome. In terms of biological role, core component of nucleosome which plays a central role in DNA double strand break (DSB) repair. Nucleosomes wrap and compact DNA into chromatin, limiting DNA accessibility to the cellular machineries which require DNA as a template. Histones thereby play a central role in transcription regulation, DNA repair, DNA replication and chromosomal stability. DNA accessibility is regulated via a complex set of post-translational modifications of histones, also called histone code, and nucleosome remodeling. The sequence is that of Histone H2A-beta (hta2) from Schizosaccharomyces pombe (strain 972 / ATCC 24843) (Fission yeast).